Consider the following 341-residue polypeptide: UDP-glucose 4-epimerase (341 aa).

This sequence belongs to the polysaccharide synthase family.

It catalyses the reaction UDP-alpha-D-glucose = UDP-alpha-D-galactose. In terms of biological role, epimerizes UDP-galactose to UDP-glucose. May contribute to formation of LPS or the exopolysaccharide slime layer by providing UDP-galactose as a substrate for either molecule. The chain is UDP-glucose 4-epimerase (capD) from Rickettsia prowazekii (strain Madrid E).